A 215-amino-acid polypeptide reads, in one-letter code: Nascent polypeptide-associated complex subunit alpha (215 aa).

The interval 1–81 (MPGEATETVP…SEKKARKAMS (81 aa)) is disordered. The segment covering 9–28 (VPATEQELPQPQAETGSGTE) has biased composition (polar residues). The span at 29 to 42 (SDSDESVPELEEQD) shows a compositional bias: acidic residues. A Phosphoserine; by ILK1 modification is found at Ser43. Over residues 44-57 (TQATTQQAQLAAAA) the composition is skewed to low complexity. The segment at 69–80 (QSRSEKKARKAM) is required for DNA-binding. Residues 70–135 (SRSEKKARKA…AKIEDLSQQA (66 aa)) form the NAC-A/B domain. Residues 93–108 (RVTIRKSKNILFVITK) are RNA/DNA-binding. Residue Ser132 is modified to Phosphoserine. Lys142 is modified (N6-acetyllysine; alternate). A Glycyl lysine isopeptide (Lys-Gly) (interchain with G-Cter in SUMO2); alternate cross-link involves residue Lys142. Position 159 is a phosphothreonine; by GSK3-beta (Thr159). A Phosphothreonine modification is found at Thr161. 4 positions are modified to phosphoserine: Ser166, Ser186, Ser191, and Ser203. The region spanning 176–213 (VEVKDIELVMSQANVSRAKAVRALKNNSNDIVNAIMEL) is the UBA domain.

The protein belongs to the NAC-alpha family. In terms of assembly, interacts with TBP and JUN. Part of the nascent polypeptide-associated complex (NAC), which is a heterodimer of NACA and BTF3 (via NAC-A/B domains). NAC associates with ribosomes through the BTF3/NACB subunit and contacts the ribosomal protein L23, which is positioned near the exiting site. Both subunits can contact nascent polypeptide chains. NACA may also form homodimers, and only this form binds DNA. Phosphorylation of Thr-159 by GSK3B may promote proteasome mediated degradation. Phosphorylation of Ser-43 by ILK during cell adhesion may promote nuclear localization. Ubiquitously expressed.

It localises to the cytoplasm. The protein resides in the nucleus. Prevents inappropriate targeting of non-secretory polypeptides to the endoplasmic reticulum (ER). Binds to nascent polypeptide chains as they emerge from the ribosome and blocks their interaction with the signal recognition particle (SRP), which normally targets nascent secretory peptides to the ER. Also reduces the inherent affinity of ribosomes for protein translocation sites in the ER membrane (M sites). May act as a specific coactivator for JUN, binding to DNA and stabilizing the interaction of JUN homodimers with target gene promoters. The sequence is that of Nascent polypeptide-associated complex subunit alpha (NACA) from Homo sapiens (Human).